A 419-amino-acid polypeptide reads, in one-letter code: Transcription termination factor Rho (419 aa).

The Rho RNA-BD domain maps to 48–123 (DIFGDGVLEI…LKVNKVNYDK (76 aa)). RNA-binding stretches follow at residues 61–66 (GFGFLR), 78–80 (DIY), and 108–110 (ERY). Residues 169 to 174 (GRGQRG), 181 to 186 (KAGKTM), and Arg-212 contribute to the ATP site. Residues 284–288 (VLTGG) are RNA-binding 2.

It belongs to the Rho family. As to quaternary structure, homohexamer. The homohexamer assembles into an open ring structure.

Facilitates transcription termination by a mechanism that involves Rho binding to the nascent RNA, activation of Rho's RNA-dependent ATPase activity, and release of the mRNA from the DNA template. This is Transcription termination factor Rho from Buchnera aphidicola subsp. Baizongia pistaciae (strain Bp).